We begin with the raw amino-acid sequence, 569 residues long: Santalene synthase (569 aa).

Arginine 284, aspartate 321, aspartate 325, and arginine 460 together coordinate (2E)-geranyl diphosphate. Residues aspartate 321 and aspartate 325 each contribute to the Mg(2+) site. The DDXXD motif motif lies at 321 to 325; sequence DDAYD. Residues asparagine 463, threonine 467, and glutamate 471 each coordinate Mg(2+).

It belongs to the terpene synthase family. Tpsb subfamily. It depends on Mg(2+) as a cofactor. The cofactor is Mn(2+).

The catalysed reaction is (2E,6E)-farnesyl diphosphate = (1S,5S,6R)-alpha-bergamotene + diphosphate. The enzyme catalyses (2E,6E)-farnesyl diphosphate = (+)-alpha-santalene + diphosphate. It carries out the reaction (2E,6E)-farnesyl diphosphate = (-)-beta-santalene + diphosphate. Catalyzes a mixture of sesquiterpenoids from (2E,6E)-farnesyl diphosphate in fragrance biosynthesis. Catalyzes the formation of alpha-santalene, beta-santalene, epi-beta-santalene and exo-alpha-bergamotene, as well as traces of alpha-farnesene and beta-farnesene. The sequence is that of Santalene synthase from Santalum austrocaledonicum (Sandalwood).